Here is a 180-residue protein sequence, read N- to C-terminus: Inner membrane-spanning protein YciB (180 aa).

6 helical membrane-spanning segments follow: residues 4–24 (LLSE…GGGI), 25–45 (QSAT…CYII), 52–72 (LSII…ISGD), 76–96 (IKIK…TSGI), 118–138 (ITLS…NEIV), and 150–170 (FKVF…LPLL).

Belongs to the YciB family.

It localises to the cell inner membrane. Its function is as follows. Plays a role in cell envelope biogenesis, maintenance of cell envelope integrity and membrane homeostasis. This chain is Inner membrane-spanning protein YciB, found in Rickettsia bellii (strain RML369-C).